The chain runs to 81 residues: Exodeoxyribonuclease 7 small subunit (81 aa).

The disordered stretch occupies residues 61–81 (MNDSDQEVAFETPQGGTGDAD).

Belongs to the XseB family. Heterooligomer composed of large and small subunits.

The protein localises to the cytoplasm. The catalysed reaction is Exonucleolytic cleavage in either 5'- to 3'- or 3'- to 5'-direction to yield nucleoside 5'-phosphates.. Functionally, bidirectionally degrades single-stranded DNA into large acid-insoluble oligonucleotides, which are then degraded further into small acid-soluble oligonucleotides. The chain is Exodeoxyribonuclease 7 small subunit from Levilactobacillus brevis (strain ATCC 367 / BCRC 12310 / CIP 105137 / JCM 1170 / LMG 11437 / NCIMB 947 / NCTC 947) (Lactobacillus brevis).